The following is a 699-amino-acid chain: MTAKPHISCQFKRDYPQLINLYPTCTIATQHSLDNLNRLRHQCLTALLTQPSPHLCVMGQWGLGDGIELLSFIHYWQTLAKTQNLPRLLLKVFEPNPINYYELKLLWDQSQSLILHPHLQPIANAIIEAKPARIIGCQRLIFDDGRISLDLDFGDLQTMLVNQPHCGTYPIQQWLILPHLAPQLSRKILWQMARLSADDAHFIGVELAETTQNLAKTCGFSPLTITADMLCGEQIDSIASQIVTDDILLHERKLLRQQANNHQAFTPRPSQVASTKQPIAIIGGGLASAHLMLSLAEREQSSILFCKDNDLGQGASGNRQGAIYPLLTPENDELSRFFQQAFLFSRRRIAALSLASMKGSDVASGVMPISHDFCGVLQTGHDERSQQRLDKIIQSQDWPAEIAYAVDASEANKIAKIGIDKAGFYYPLGGWVCPFEYAKAAVDKASQLANVQCHFNTEITEIERDAKGWYLLSQDQRFGPFRQLVLANGAQLTQFSASERLQISPFRGQVSHIPSQFQLSQLATVLCANGYLTPSHQGLHCLGASYVKAAEHLDFCPLEQLENLGKMQQSYPNQDWVEDIDISANSARVGVRMVTRDHFPMMGCAPDVNEIWARYEQHQINQQQAEQIRHYWQTTPAPIHDGLYILGGLGSRGLSSGPLAAECLAAQLTDEPLPLDWPTLNKLSPNRMWLRKLLKGKAL.

Positions 1–260 (MTAKPHISCQ…ERKLLRQQAN (260 aa)) are tRNA (mnm(5)s(2)U34)-methyltransferase. The FAD-dependent cmnm(5)s(2)U34 oxidoreductase stretch occupies residues 282–699 (IGGGLASAHL…LRKLLKGKAL (418 aa)).

This sequence in the N-terminal section; belongs to the methyltransferase superfamily. tRNA (mnm(5)s(2)U34)-methyltransferase family. In the C-terminal section; belongs to the DAO family. Requires FAD as cofactor.

The protein localises to the cytoplasm. The catalysed reaction is 5-aminomethyl-2-thiouridine(34) in tRNA + S-adenosyl-L-methionine = 5-methylaminomethyl-2-thiouridine(34) in tRNA + S-adenosyl-L-homocysteine + H(+). In terms of biological role, catalyzes the last two steps in the biosynthesis of 5-methylaminomethyl-2-thiouridine (mnm(5)s(2)U) at the wobble position (U34) in tRNA. Catalyzes the FAD-dependent demodification of cmnm(5)s(2)U34 to nm(5)s(2)U34, followed by the transfer of a methyl group from S-adenosyl-L-methionine to nm(5)s(2)U34, to form mnm(5)s(2)U34. This chain is tRNA 5-methylaminomethyl-2-thiouridine biosynthesis bifunctional protein MnmC, found in Shewanella oneidensis (strain ATCC 700550 / JCM 31522 / CIP 106686 / LMG 19005 / NCIMB 14063 / MR-1).